The primary structure comprises 129 residues: Protein Turandot A1 (129 aa).

Positions methionine 1–glycine 21 are cleaved as a signal peptide. Residue asparagine 49 is glycosylated (N-linked (GlcNAc...) asparagine).

It belongs to the Turandot family.

Its subcellular location is the secreted. A humoral factor that plays a role in stress tolerance; gives increased resistance to the lethal effects of bacterial challenge and stress. Regulated by the JAK/STAT pathway and NF-KB-like Relish pathway in the fat body, upd3 in the hemocytes and Mekk1 in response to septic injury and consequent immune response. The sequence is that of Protein Turandot A1 (TotA1) from Drosophila simulans (Fruit fly).